The chain runs to 365 residues: Baculoviral IAP repeat-containing protein 7 (365 aa).

BIR repeat units lie at residues Arg-7–Gln-73 and Arg-115–Leu-180. Cys-149, Cys-152, His-169, and Cys-176 together coordinate Zn(2+). Residues Ala-186–Ala-234 are self-inhibits the anti-apoptotic function. Ser-198 is subject to Phosphoserine. Residue Ser-202 is modified to Phosphoserine; by MAPK1. Ser-212 is modified (phosphoserine). 2 positions are modified to phosphoserine; by MAPK1: Ser-216 and Ser-219. A disordered region spans residues Thr-278–Glu-306. Residues Thr-288–Lys-297 show a composition bias toward basic and acidic residues. An RING-type zinc finger spans residues Cys-318–Arg-353.

It belongs to the IAP family. Auto-ubiquitinated, and degraded in a 2-step mechanism; a caspase-independent first step and a caspase-dependent second step. In terms of processing, phosphorylated via MAPK-dependent and CDK-dependent pathways during oocyte maturation. Phosphorylation does not appear to affect caspase inhibition or autoubiquitination activity.

It localises to the cytoplasm. It catalyses the reaction S-ubiquitinyl-[E2 ubiquitin-conjugating enzyme]-L-cysteine + [acceptor protein]-L-lysine = [E2 ubiquitin-conjugating enzyme]-L-cysteine + N(6)-ubiquitinyl-[acceptor protein]-L-lysine.. Its function is as follows. Weak apoptotic suppressor. Has E3 ubiquitin-protein ligase activity. Weak inhibitor of caspase activity. The chain is Baculoviral IAP repeat-containing protein 7 (birc7) from Xenopus tropicalis (Western clawed frog).